A 315-amino-acid chain; its full sequence is Probable cell division protein WhiA (315 aa).

Positions 280–313 (SLKELGQMLDPQVGKSGINHRLRKIEKIAEELRT) form a DNA-binding region, H-T-H motif.

This sequence belongs to the WhiA family.

Its function is as follows. Involved in cell division and chromosome segregation. This Clostridium botulinum (strain Alaska E43 / Type E3) protein is Probable cell division protein WhiA.